The following is a 94-amino-acid chain: PqqA binding protein (94 aa).

Belongs to the PqqD family. Monomer. Interacts with PqqE.

The protein operates within cofactor biosynthesis; pyrroloquinoline quinone biosynthesis. Functionally, functions as a PqqA binding protein and presents PqqA to PqqE, in the pyrroloquinoline quinone (PQQ) biosynthetic pathway. The polypeptide is PqqA binding protein (Pseudomonas savastanoi pv. phaseolicola (strain 1448A / Race 6) (Pseudomonas syringae pv. phaseolicola (strain 1448A / Race 6))).